Reading from the N-terminus, the 317-residue chain is Ret finger protein-like 3 (317 aa).

The segment at 40–82 (CPVCSDYLEKPMSLECGCTVCLKCINSLQKEPHGEDLLCCCCS) adopts an RING-type zinc-finger fold. The 195-residue stretch at 107–301 (EPKLKKILQM…DQGVLSICPL (195 aa)) folds into the B30.2/SPRY domain.

Expressed during neurogenesis in differentiating human embryonic stem cells and in the developing human neocortex.

It is found in the cytoplasm. It localises to the nucleus. Functionally, (Microbial infection) Stimulates the activity of Human Immunodeficiency Virus 1/HIV-1 pre-integration complex. This is Ret finger protein-like 3 (RFPL3) from Homo sapiens (Human).